The chain runs to 260 residues: GTP cyclohydrolase FolE2 (260 aa).

It belongs to the GTP cyclohydrolase IV family.

It carries out the reaction GTP + H2O = 7,8-dihydroneopterin 3'-triphosphate + formate + H(+). The protein operates within cofactor biosynthesis; 7,8-dihydroneopterin triphosphate biosynthesis; 7,8-dihydroneopterin triphosphate from GTP: step 1/1. Converts GTP to 7,8-dihydroneopterin triphosphate. The chain is GTP cyclohydrolase FolE2 from Desulfovibrio desulfuricans (strain ATCC 27774 / DSM 6949 / MB).